We begin with the raw amino-acid sequence, 413 residues long: Lysosomal phospholipase A and acyltransferase (413 aa).

The signal sequence occupies residues Met-1 to Pro-33. Asp-46 is a binding site for substrate. An intrachain disulfide couples Cys-65 to Cys-89. The N-linked (GlcNAc...) asparagine glycan is linked to Asn-99. The active-site Acyl-ester intermediate is the Ser-198. Residue Ser-198 coordinates Zn(2+). Residue Met-199 coordinates substrate. 2 N-linked (GlcNAc...) asparagine glycosylation sites follow: Asn-273 and Asn-289. Residue Cys-355 participates in Zn(2+) binding. Active-site charge relay system residues include Asp-360 and His-392. His-392 serves as a coordination point for Zn(2+). N-linked (GlcNAc...) asparagine glycosylation occurs at Asn-398.

It belongs to the AB hydrolase superfamily. Lipase family. N-glycosylated. N-glycosylation is important for maturation of the enzyme and normal subcellular location. In terms of tissue distribution, detected in alveolar macrophages (at protein level). Widely expressed. Expressed at highest levels in alveolar macrophages.

It localises to the lysosome. The protein resides in the secreted. It is found in the membrane. It catalyses the reaction a 1,2-diacyl-sn-glycero-3-phosphocholine + H2O = a 2-acyl-sn-glycero-3-phosphocholine + a fatty acid + H(+). The enzyme catalyses 1,2-dihexadecanoyl-sn-glycero-3-phosphocholine + H2O = 2-hexadecanoyl-sn-glycero-3-phosphocholine + hexadecanoate + H(+). The catalysed reaction is 1-hexadecanoyl-2-(9Z-octadecenoyl)-sn-glycero-3-phosphocholine + H2O = 2-(9Z-octadecenoyl)-sn-glycero-3-phosphocholine + hexadecanoate + H(+). It carries out the reaction 1,2-di-(9Z-octadecenoyl)-sn-glycero-3-phosphocholine + H2O = 2-(9Z-octadecenoyl)-sn-glycero-3-phosphocholine + (9Z)-octadecenoate + H(+). It catalyses the reaction 1-hexadecanoyl-2-glutaroyl-sn-glycero-3-phosphocholine + H2O = 2-glutaroyl-sn-glycero-3-phosphocholine + hexadecanoate + H(+). The enzyme catalyses 1-hexadecanoyl-2-nonadioyl-sn-glycero-3-phosphocholine + H2O = 2-nonadioyl-sn-glycero-3-phosphocholine + hexadecanoate + H(+). The catalysed reaction is 1-hexadecanoyl-2-(5-oxopentanoyl)-sn-glycero-3-phosphocholine + H2O = 2-(5-oxopentanoyl)-sn-glycero-3-phosphocholine + hexadecanoate + H(+). It carries out the reaction 1-hexadecanoyl-2-(9-oxononanoyl)-sn-glycero-3-phosphocholine + H2O = 2-(9-oxononanoyl)-sn-glycero-3-phosphocholine + hexadecanoate + H(+). It catalyses the reaction a 1,2-diacyl-sn-glycero-3-phosphocholine + H2O = a 1-acyl-sn-glycero-3-phosphocholine + a fatty acid + H(+). The enzyme catalyses 1,2-dihexadecanoyl-sn-glycero-3-phosphocholine + H2O = 1-hexadecanoyl-sn-glycero-3-phosphocholine + hexadecanoate + H(+). The catalysed reaction is 1-hexadecanoyl-2-(9Z-octadecenoyl)-sn-glycero-3-phosphocholine + H2O = 1-hexadecanoyl-sn-glycero-3-phosphocholine + (9Z)-octadecenoate + H(+). It carries out the reaction 1,2-di-(9Z-octadecenoyl)-sn-glycero-3-phosphocholine + H2O = 1-(9Z-octadecenoyl)-sn-glycero-3-phosphocholine + (9Z)-octadecenoate + H(+). It catalyses the reaction a 1-acyl-sn-glycero-3-phosphocholine + H2O = sn-glycerol 3-phosphocholine + a fatty acid + H(+). The enzyme catalyses 1-hexadecanoyl-sn-glycero-3-phosphocholine + H2O = sn-glycerol 3-phosphocholine + hexadecanoate + H(+). The catalysed reaction is N-(acetyl)-sphing-4-enine + a 1,2-diacyl-sn-glycero-3-phosphoethanolamine = 1-O-acyl-N-(acetyl)-sphing-4-enine + a 2-acyl-sn-glycero-3-phosphoethanolamine. It carries out the reaction 1-hexadecanoyl-2-(9Z-octadecenoyl)-sn-glycero-3-phosphoethanolamine + N-(acetyl)-sphing-4-enine = 2-(9Z-octadecenoyl)-sn-glycero-3-phosphoethanolamine + 1-hexadecanoyl-N-(acetyl)-sphing-4-enine. It catalyses the reaction 1-hexadecanoyl-2-(9Z,12Z-octadecadienoyl)-sn-glycero-3-phosphoethanolamine + N-(acetyl)-sphing-4-enine = 2-(9Z,12Z)-octadecadienoyl-sn-glycero-3-phosphoethanolamine + 1-hexadecanoyl-N-(acetyl)-sphing-4-enine. The enzyme catalyses 1-hexadecanoyl-2-(5Z,8Z,11Z,14Z-eicosatetraenoyl)-sn-glycero-3-phosphoethanolamine + N-(acetyl)-sphing-4-enine = 2-(5Z,8Z,11Z,14Z)-eicosatetraenoyl-sn-glycero-3-phosphoethanolamine + 1-hexadecanoyl-N-(acetyl)-sphing-4-enine. The catalysed reaction is N-(acetyl)-sphing-4-enine + a 1,2-diacyl-sn-glycero-3-phosphoethanolamine = 1-O-acyl-N-(acetyl)-sphing-4-enine + a 1-acyl-sn-glycero-3-phosphoethanolamine. It carries out the reaction 1-hexadecanoyl-2-(9Z-octadecenoyl)-sn-glycero-3-phosphoethanolamine + N-(acetyl)-sphing-4-enine = 1-(9Z-octadecenoyl)-N-(acetyl)-sphing-4-enine + 1-hexadecanoyl-sn-glycero-3-phosphoethanolamine. It catalyses the reaction 1-hexadecanoyl-2-(9Z,12Z-octadecadienoyl)-sn-glycero-3-phosphoethanolamine + N-(acetyl)-sphing-4-enine = 1-(9Z,12Z-octadecadienoyl)-N-acetylsphing-4-enine + 1-hexadecanoyl-sn-glycero-3-phosphoethanolamine. The enzyme catalyses 1-hexadecanoyl-2-(5Z,8Z,11Z,14Z-eicosatetraenoyl)-sn-glycero-3-phosphoethanolamine + N-(acetyl)-sphing-4-enine = 1-(5Z,8Z,11Z,14Z)-eicosatetraenoyl-N-(acetyl)-sphing-4-enine + 1-hexadecanoyl-sn-glycero-3-phosphoethanolamine. The catalysed reaction is N-(acetyl)-sphing-4-enine + a 1,2-diacyl-sn-glycero-3-phosphocholine = 1-O-acyl-N-(acetyl)-sphing-4-enine + a 2-acyl-sn-glycero-3-phosphocholine. It carries out the reaction 1-hexadecanoyl-2-(9Z-octadecenoyl)-sn-glycero-3-phosphocholine + N-(acetyl)-sphing-4-enine = 1-hexadecanoyl-N-(acetyl)-sphing-4-enine + 2-(9Z-octadecenoyl)-sn-glycero-3-phosphocholine. It catalyses the reaction 1-hexadecanoyl-2-(9Z,12Z-octadecadienoyl)-sn-glycero-3-phosphocholine + N-(acetyl)-sphing-4-enine = 2-(9Z,12Z-octadecadienoyl)-sn-glycero-3-phosphocholine + 1-hexadecanoyl-N-(acetyl)-sphing-4-enine. The enzyme catalyses 1-hexadecanoyl-2-(5Z,8Z,11Z,14Z-eicosatetraenoyl)-sn-glycero-3-phosphocholine + N-(acetyl)-sphing-4-enine = 1-hexadecanoyl-N-(acetyl)-sphing-4-enine + 2-(5Z,8Z,11Z,14Z)-eicosatetraenoyl-sn-glycero-3-phosphocholine. The catalysed reaction is 1-hexadecanoyl-2-(4Z,7Z,10Z,13Z,16Z,19Z-docosahexaenoyl)-sn-glycero-3-phosphocholine + N-(acetyl)-sphing-4-enine = 2-(4Z,7Z,10Z,13Z,16Z,19Z-docosahexaenoyl)-sn-glycero-3-phosphocholine + 1-hexadecanoyl-N-(acetyl)-sphing-4-enine. It carries out the reaction 1-hexadecanoyl-2-nonadioyl-sn-glycero-3-phosphocholine + N-(acetyl)-sphing-4-enine = 2-nonadioyl-sn-glycero-3-phosphocholine + 1-hexadecanoyl-N-(acetyl)-sphing-4-enine. It catalyses the reaction 1-octadecanoyl-2-(9Z-octadecenoyl)-sn-glycero-3-phosphocholine + N-(acetyl)-sphing-4-enine = 1-octadecanoyl-N-(acetyl)-sphing-4-enine + 2-(9Z-octadecenoyl)-sn-glycero-3-phosphocholine. The enzyme catalyses 1-(9Z)-octadecenoyl-2-octadecanoyl-sn-glycero-3-phosphocholine + N-(acetyl)-sphing-4-enine = 2-octadecanoyl-sn-glycero-3-phosphocholine + 1-(9Z-octadecenoyl)-N-(acetyl)-sphing-4-enine. The catalysed reaction is 1-octadecanoyl-2-(5Z,8Z,11Z,14Z-eicosatetraenoyl)-sn-glycero-3-phosphocholine + N-(acetyl)-sphing-4-enine = 1-octadecanoyl-N-(acetyl)-sphing-4-enine + 2-(5Z,8Z,11Z,14Z)-eicosatetraenoyl-sn-glycero-3-phosphocholine. It carries out the reaction 1-(9Z-octadecenoyl)-2-hexadecanoyl-sn-glycero-3-phosphocholine + N-(acetyl)-sphing-4-enine = 1-(9Z-octadecenoyl)-N-(acetyl)-sphing-4-enine + 2-hexadecanoyl-sn-glycero-3-phosphocholine. It catalyses the reaction N-(acetyl)-sphing-4-enine + a 1,2-diacyl-sn-glycero-3-phosphocholine = 1-O-acyl-N-(acetyl)-sphing-4-enine + a 1-acyl-sn-glycero-3-phosphocholine. The enzyme catalyses 1-hexadecanoyl-2-(9Z-octadecenoyl)-sn-glycero-3-phosphocholine + N-(acetyl)-sphing-4-enine = 1-(9Z-octadecenoyl)-N-(acetyl)-sphing-4-enine + 1-hexadecanoyl-sn-glycero-3-phosphocholine. The catalysed reaction is 1-hexadecanoyl-2-(9Z,12Z-octadecadienoyl)-sn-glycero-3-phosphocholine + N-(acetyl)-sphing-4-enine = 1-(9Z,12Z-octadecadienoyl)-N-acetylsphing-4-enine + 1-hexadecanoyl-sn-glycero-3-phosphocholine. It carries out the reaction 1-hexadecanoyl-2-(5Z,8Z,11Z,14Z-eicosatetraenoyl)-sn-glycero-3-phosphocholine + N-(acetyl)-sphing-4-enine = 1-(5Z,8Z,11Z,14Z)-eicosatetraenoyl-N-(acetyl)-sphing-4-enine + 1-hexadecanoyl-sn-glycero-3-phosphocholine. It catalyses the reaction 1-hexadecanoyl-2-(4Z,7Z,10Z,13Z,16Z,19Z-docosahexaenoyl)-sn-glycero-3-phosphocholine + N-(acetyl)-sphing-4-enine = 1-(4Z,7Z,10Z,13Z,16Z,19Z-docosahexaenoyl)-N-(acetyl)-sphing-4-enine + 1-hexadecanoyl-sn-glycero-3-phosphocholine. The enzyme catalyses 1-octadecanoyl-2-(9Z-octadecenoyl)-sn-glycero-3-phosphocholine + N-(acetyl)-sphing-4-enine = 1-(9Z-octadecenoyl)-N-(acetyl)-sphing-4-enine + 1-octadecanoyl-sn-glycero-3-phosphocholine. The catalysed reaction is 1-octadecanoyl-2-(9Z,12Z)-octadecadienoyl-sn-glycero-3-phosphocholine + N-(acetyl)-sphing-4-enine = 1-(9Z,12Z-octadecadienoyl)-N-acetylsphing-4-enine + 1-octadecanoyl-sn-glycero-3-phosphocholine. It carries out the reaction 1-(9Z-octadecenoyl)-2-hexadecanoyl-sn-glycero-3-phosphocholine + N-(acetyl)-sphing-4-enine = 1-hexadecanoyl-N-(acetyl)-sphing-4-enine + 1-(9Z-octadecenoyl)-sn-glycero-3-phosphocholine. It catalyses the reaction 1-(9Z)-octadecenoyl-2-octadecanoyl-sn-glycero-3-phosphocholine + N-(acetyl)-sphing-4-enine = 1-octadecanoyl-N-(acetyl)-sphing-4-enine + 1-(9Z-octadecenoyl)-sn-glycero-3-phosphocholine. The enzyme catalyses 1,2-di-(9Z-octadecenoyl)-sn-glycero-3-phosphocholine + N-(acetyl)-sphing-4-enine = 1-(9Z-octadecenoyl)-N-(acetyl)-sphing-4-enine + 1-(9Z-octadecenoyl)-sn-glycero-3-phosphocholine. The catalysed reaction is 1-octadecanoyl-2-(5Z,8Z,11Z,14Z-eicosatetraenoyl)-sn-glycero-3-phosphocholine + N-(acetyl)-sphing-4-enine = 1-(5Z,8Z,11Z,14Z)-eicosatetraenoyl-N-(acetyl)-sphing-4-enine + 1-octadecanoyl-sn-glycero-3-phosphocholine. It carries out the reaction a 1,2-diacyl-sn-glycero-3-phospho-L-serine + N-(acetyl)-sphing-4-enine = a 2-acyl-sn-glycero-3-phospho-L-serine + 1-O-acyl-N-(acetyl)-sphing-4-enine. It catalyses the reaction 1-octadecanoyl-2-(9Z-octadecenoyl)-sn-glycero-3-phospho-L-serine + N-(acetyl)-sphing-4-enine = 2-(9Z-octadecenoyl)-sn-glycero-3-phospho-L-serine + 1-octadecanoyl-N-(acetyl)-sphing-4-enine. The enzyme catalyses a 1,2-diacyl-sn-glycero-3-phospho-L-serine + N-(acetyl)-sphing-4-enine = 1-O-acyl-N-(acetyl)-sphing-4-enine + a 1-acyl-sn-glycero-3-phospho-L-serine. The catalysed reaction is 1-octadecanoyl-2-(9Z-octadecenoyl)-sn-glycero-3-phospho-L-serine + N-(acetyl)-sphing-4-enine = 1-octadecanoyl-sn-glycero-3-phosphoserine + 1-(9Z-octadecenoyl)-N-(acetyl)-sphing-4-enine. It carries out the reaction a 1,2-diacyl-sn-glycero-3-phospho-(1'-sn-glycerol) + N-(acetyl)-sphing-4-enine = 2-acyl-sn-glycero-3-phospho-(1'-sn-glycerol) + 1-O-acyl-N-(acetyl)-sphing-4-enine. It catalyses the reaction 1-octadecanoyl-2-(9Z-octadecenoyl)-sn-glycero-3-phospho-(1'-sn-glycerol) + N-(acetyl)-sphing-4-enine = 2-(9Z-octadecenoyl)-sn-glycero-3-phospho-(1'-sn-glycerol) + 1-octadecanoyl-N-(acetyl)-sphing-4-enine. The enzyme catalyses a 1,2-diacyl-sn-glycero-3-phospho-(1'-sn-glycerol) + N-(acetyl)-sphing-4-enine = 1-O-acyl-N-(acetyl)-sphing-4-enine + 1-acyl-sn-glycero-3-phospho-(1'-sn-glycerol). The catalysed reaction is 1-octadecanoyl-2-(9Z-octadecenoyl)-sn-glycero-3-phospho-(1'-sn-glycerol) + N-(acetyl)-sphing-4-enine = 1-octadecanoyl-sn-glycero-3-phospho-(1'-sn-glycerol) + 1-(9Z-octadecenoyl)-N-(acetyl)-sphing-4-enine. It carries out the reaction an N-acylethanolamine + a 1,2-diacyl-sn-glycero-3-phosphocholine = 2-(acylamino)ethyl fatty acid + a 2-acyl-sn-glycero-3-phosphocholine. It catalyses the reaction an N-acylethanolamine + a 1,2-diacyl-sn-glycero-3-phosphocholine = 2-(acylamino)ethyl fatty acid + a 1-acyl-sn-glycero-3-phosphocholine. The enzyme catalyses N-(5Z,8Z,11Z,14Z-eicosatetraenoyl)-ethanolamine + 1,2-di-(9Z-octadecenoyl)-sn-glycero-3-phosphocholine = 2-[(5Z,8Z,11Z,14Z)-eicosatetraenoylamino]ethyl (9Z)-octadecenoate + (9Z-octadecenoyl)-sn-glycero-3-phosphocholine. The catalysed reaction is N-(9Z-octadecenoyl) ethanolamine + 1,2-di-(9Z-octadecenoyl)-sn-glycero-3-phosphocholine = 2-[(9Z)-octadecenoylamino]ethyl (9Z)-octadecenoate + (9Z-octadecenoyl)-sn-glycero-3-phosphocholine. It carries out the reaction a 3-acyl-sn-glycerol + a 1,2-diacyl-sn-glycero-3-phosphocholine = a 1,3-diacylglycerol + a 1-acyl-sn-glycero-3-phosphocholine. It catalyses the reaction a 3-acyl-sn-glycerol + a 1,2-diacyl-sn-glycero-3-phosphocholine = a 1,3-diacylglycerol + a 2-acyl-sn-glycero-3-phosphocholine. The enzyme catalyses 3-(9Z-octadecenoyl)-sn-glycerol + 1,2-di-(9Z-octadecenoyl)-sn-glycero-3-phosphocholine = 1,3-di-(9Z-octadecenoyl)-glycerol + (9Z-octadecenoyl)-sn-glycero-3-phosphocholine. The catalysed reaction is 3-hexadecanoyl-sn-glycerol + 1,2-di-(9Z-octadecenoyl)-sn-glycero-3-phosphocholine = 1-(9Z)-octadecenoyl-3-hexadecanoyl-sn-glycerol + (9Z-octadecenoyl)-sn-glycero-3-phosphocholine. It carries out the reaction a 1-acyl-sn-glycerol + a 1,2-diacyl-sn-glycero-3-phosphocholine = a 1,3-diacylglycerol + a 2-acyl-sn-glycero-3-phosphocholine. It catalyses the reaction a 1-acyl-sn-glycerol + a 1,2-diacyl-sn-glycero-3-phosphocholine = a 1,3-diacylglycerol + a 1-acyl-sn-glycero-3-phosphocholine. The enzyme catalyses 1-(9Z-octadecenoyl)-sn-glycerol + 1,2-di-(9Z-octadecenoyl)-sn-glycero-3-phosphocholine = 1,3-di-(9Z-octadecenoyl)-glycerol + (9Z-octadecenoyl)-sn-glycero-3-phosphocholine. The catalysed reaction is 1-hexadecanoyl-sn-glycerol + 1,2-di-(9Z-octadecenoyl)-sn-glycero-3-phosphocholine = 1-hexadecanoyl-3-(9Z)-octadecenoyl-sn-glycerol + (9Z-octadecenoyl)-sn-glycero-3-phosphocholine. It carries out the reaction a 2-acylglycerol + a 1,2-diacyl-sn-glycero-3-phosphocholine = a 1,2-diacylglycerol + a 2-acyl-sn-glycero-3-phosphocholine. It catalyses the reaction a 2-acylglycerol + a 1,2-diacyl-sn-glycero-3-phosphocholine = a 1,2-diacylglycerol + a 1-acyl-sn-glycero-3-phosphocholine. The enzyme catalyses 2-hexadecanoylglycerol + 1,2-di-(9Z-octadecenoyl)-sn-glycero-3-phosphocholine = 1-(9Z)-octadecenoyl-2-hexadecanoylglycerol + (9Z-octadecenoyl)-sn-glycero-3-phosphocholine. The catalysed reaction is 1-O-alkylglycerol + a 1,2-diacyl-sn-glycero-3-phosphocholine = 1-O-alkyl-3-acylglycerol + a 1-acyl-sn-glycero-3-phosphocholine. It carries out the reaction 1-O-alkylglycerol + a 1,2-diacyl-sn-glycero-3-phosphocholine = 1-O-alkyl-3-acylglycerol + a 2-acyl-sn-glycero-3-phosphocholine. It catalyses the reaction 1-O-hexadecylglycerol + 1,2-di-(9Z-octadecenoyl)-sn-glycero-3-phosphocholine = 1-O-hexadecyl-3-(9Z)-octadecenoylglycerol + (9Z-octadecenoyl)-sn-glycero-3-phosphocholine. The enzyme catalyses 1-O-alkyl-2-acyl-sn-glycerol + a 1,2-diacyl-sn-glycero-3-phosphocholine = 1-O-alkyl-2,3-diacyl-sn-glycerol + a 2-acyl-sn-glycero-3-phosphocholine. The catalysed reaction is 1-O-alkyl-2-acyl-sn-glycerol + a 1,2-diacyl-sn-glycero-3-phosphocholine = 1-O-alkyl-2,3-diacyl-sn-glycerol + a 1-acyl-sn-glycero-3-phosphocholine. It carries out the reaction 1-O-hexadecyl-2-acetyl-sn-glycerol + 1,2-di-(9Z-octadecenoyl)-sn-glycero-3-phosphocholine = 1-O-hexadecyl-2-acetyl-3-(9Z)-octadecenoyl-sn-glycerol + (9Z-octadecenoyl)-sn-glycero-3-phosphocholine. It catalyses the reaction 1-O-hexadecyl-2-O-methyl-sn-glycerol + 1,2-di-(9Z-octadecenoyl)-sn-glycero-3-phosphocholine = 1-O-hexadecyl-2-O-methyl-3-(9Z)-octadecenoyl-sn-glycerol + (9Z-octadecenoyl)-sn-glycero-3-phosphocholine. The enzyme catalyses a 1,2-diacyl-sn-glycero-3-phosphoethanolamine + H2O = a 1-acyl-sn-glycero-3-phosphoethanolamine + a fatty acid + H(+). The catalysed reaction is 1-acyl-2-(5Z,8Z,11Z,14Z)-eicosatetraenoyl-sn-glycero-3-phosphoethanolamine + H2O = a 1-acyl-sn-glycero-3-phosphoethanolamine + (5Z,8Z,11Z,14Z)-eicosatetraenoate + H(+). It carries out the reaction a 1,2-diacyl-sn-glycero-3-phospho-(1'-sn-glycerol) + H2O = 1-acyl-sn-glycero-3-phospho-(1'-sn-glycerol) + a fatty acid + H(+). It catalyses the reaction 1-hexadecanoyl-2-(9Z-octadecenoyl)-sn-glycero-3-phospho-(1'-sn-glycerol) + H2O = 1-hexadecanoyl-sn-glycero-3-phospho-(1'-sn-glycerol) + (9Z)-octadecenoate + H(+). The enzyme catalyses a 1,2-diacyl-sn-glycero-3-phospho-(1'-sn-glycerol) + H2O = 2-acyl-sn-glycero-3-phospho-(1'-sn-glycerol) + a fatty acid + H(+). The catalysed reaction is 1-hexadecanoyl-2-(9Z-octadecenoyl)-sn-glycero-3-phospho-(1'-sn-glycerol) + H2O = 2-(9Z-octadecenoyl)-sn-glycero-3-phospho-(1'-sn-glycerol) + hexadecanoate + H(+). Its activity is regulated as follows. Transacylase activity is inhibited by MJ33. In terms of biological role, has dual calcium-independent phospholipase and O-acyltransferase activities with a potential role in glycerophospholipid homeostasis and remodeling of acyl groups of lipophilic alcohols present in acidic cellular compartments. Catalyzes hydrolysis of the ester bond of the fatty acyl group attached at sn-1 or sn-2 position of phospholipids (phospholipase A1 or A2 activity) and transfer it to the hydroxyl group at the first carbon of lipophilic alcohols (O-acyltransferase activity). Among preferred fatty acyl donors are phosphatidylcholines, phosphatidylethanolamines, phosphatidylglycerols and phosphatidylserines. Favors sn-2 over sn-1 deacylation of unsaturated fatty acyl groups of phosphatidylcholines, phosphatidylethanolamines, and phosphatidylglycerols. Among preferred fatty acyl acceptors are natural lipophilic alcohols including short-chain ceramide N-acetyl-sphingosine (C2 ceramide), alkylacylglycerols, monoacylglycerols, and acylethanolamides such as anandamide and oleoylethanolamide. Selectively hydrolyzes the sn-1 fatty acyl group of truncated oxidized phospholipids and may play a role in detoxification of reactive oxidized phospholipids during oxidative stress. Required for normal phospholipid degradation in alveolar macrophages with potential implications in the clearance of pulmonary surfactant, which is mainly composed of dipalmitoylphosphatidylcholine (1,2-dihexadecanoyl-sn-glycero-3-phosphocholine). Involved in the first step of bis(monoacylglycero)phosphate (BMP) de novo synthesis from phosphatidylglycerol (1,2-diacyl-sn-glycero-3-phospho-(1'-sn-glycerol), PG). BMP is an important player in cargo sorting and degradation, regulation of cellular cholesterol levels and intercellular communication. At neutral pH, hydrolyzes the sn-1 fatty acyl group of the lysophosphatidylcholines. The protein is Lysosomal phospholipase A and acyltransferase (Pla2g15) of Rattus norvegicus (Rat).